The following is a 419-amino-acid chain: Keratin, type II cytoskeletal I (419 aa).

A linker 1 region spans residues 1 to 16; it reads KGSTKRANLDPLFEKY. One can recognise an IF rod domain in the interval 1-275; the sequence is KGSTKRANLD…YMLEGEEGRM (275 aa). The interval 17–108 is coil 1B; that stretch reads ISDLKRYLDN…TLFAAELSQV (92 aa). Positions 109–132 are linker 12; that stretch reads HDQVTDTSVVLTMDNNRDLNLDSI. The coil 2 stretch occupies residues 133–271; the sequence is IKEVKCQYEQ…STYRYMLEGE (139 aa). Residues 272-419 form a tail region; it reads EGRMSGQISN…STTSTTKRSY (148 aa).

Belongs to the intermediate filament family. Heterotetramer of two type I and two type II keratins.

The sequence is that of Keratin, type II cytoskeletal I from Xenopus laevis (African clawed frog).